The primary structure comprises 100 residues: Small ribosomal subunit protein uS14c (100 aa).

It belongs to the universal ribosomal protein uS14 family. As to quaternary structure, part of the 30S ribosomal subunit.

The protein resides in the plastid. It is found in the chloroplast. Functionally, binds 16S rRNA, required for the assembly of 30S particles. This Bigelowiella natans (Pedinomonas minutissima) protein is Small ribosomal subunit protein uS14c.